We begin with the raw amino-acid sequence, 72 residues long: Large ribosomal subunit protein uL29 (72 aa).

It belongs to the universal ribosomal protein uL29 family.

This chain is Large ribosomal subunit protein uL29, found in Caldicellulosiruptor bescii (strain ATCC BAA-1888 / DSM 6725 / KCTC 15123 / Z-1320) (Anaerocellum thermophilum).